Here is a 619-residue protein sequence, read N- to C-terminus: MNPRLLEYYNQELQHIRESAAEFAEEFPKIAGRLSLSGFECADPYVERLLEGFAYLTARVQLKLDAEYPTFTHNLLEIAYPHYLAPTPSMTVVQLRPDPNEGALSSGFSIERGASLRGQLGPDDQTACEYRTAHPVTLWPLEVAQADYFGNPAAVLGRLAASEPRAKAGLRIRLRSGAGIPFDSLSLDALPLYLHGADEQPYRLYEQLLGNACAVFVRAPDNAWVERLPTSSLRARGFDDEDALLPVVPRAFQGYRLLQEYFALPARFLFVEFSGLNRALRRCHGEELELVVLFGKHDQRLEGTVDAEQLVPFCTPAINLFPRRCDRIHLSDRVNEHHVIVDRTRPLDFEVHSLQQVSGHGSGPEQPFQPFYAVRDPARYGREQAYFRVRREPRVLSSKQRRKGPRSTYVGSETFVALVDANQAPYRHDLRQLGIAALCTNRDLPLFMPIGAHKSDFTLEDSAPVMQVRCLAGPSRPRASRAHDASAWRLISQLSLNYLSLAERGQGAAALRELLRLYGDSGDPALQLQIEGLREVSSKPCTRRLPMPGPIVFGRGLEITLDFDENAFRGTGVFLLGAVFERFLARYVSINSFTETVLRTGERGEVMRWQAKPGSRPNL.

As to quaternary structure, interacts with TssA1.

Its function is as follows. Core component of the H1 type VI (H1-T6SS) secretion system that plays a role in the release of toxins targeting both eukaryotic and prokaryotic species. The chain is Type VI secretion system component TssF1 from Pseudomonas aeruginosa (strain ATCC 15692 / DSM 22644 / CIP 104116 / JCM 14847 / LMG 12228 / 1C / PRS 101 / PAO1).